Reading from the N-terminus, the 81-residue chain is Small ribosomal subunit protein bS20 (81 aa).

It belongs to the bacterial ribosomal protein bS20 family.

Functionally, binds directly to 16S ribosomal RNA. In Mycoplasma mycoides subsp. mycoides SC (strain CCUG 32753 / NCTC 10114 / PG1), this protein is Small ribosomal subunit protein bS20.